The chain runs to 153 residues: Large ribosomal subunit protein bL9 (153 aa).

This sequence belongs to the bacterial ribosomal protein bL9 family.

Functionally, binds to the 23S rRNA. This Tropheryma whipplei (strain Twist) (Whipple's bacillus) protein is Large ribosomal subunit protein bL9.